The chain runs to 737 residues: Zinc finger protein 184 (737 aa).

Positions 28–99 (VTFKDVVVNF…DSCIPVGPLE (72 aa)) constitute a KRAB domain. The residue at position 117 (Ser-117) is a Phosphoserine. A Glycyl lysine isopeptide (Lys-Gly) (interchain with G-Cter in SUMO2) cross-link involves residue Lys-185. 17 C2H2-type zinc fingers span residues 201 to 223 (CKCN…QRTH), 229 to 251 (YKCN…QRIH), 257 to 279 (YKCD…QRIH), 285 to 307 (YKCD…QRIH), 313 to 335 (YTCT…QKIH), 341 to 363 (FKCE…QKIH), 369 to 391 (YKCN…HMIH), 397 to 419 (YECN…QKTH), 425 to 447 (YDCA…LKIH), 453 to 475 (YKCS…RRIH), 481 to 503 (FECS…QKTH), 509 to 531 (YECK…ERIH), 537 to 559 (YQCH…KKIH), 565 to 587 (YKCN…KRIH), 593 to 615 (YACP…QKTH), 621 to 643 (YQCN…QRIH), and 649 to 671 (YKCS…RSTH). The C2H2-type 18; degenerate zinc finger occupies 677–698 (YNSECPQTFSQSTYLTQHQKIH). The C2H2-type 19 zinc finger occupies 704-726 (LGCEDCEKAFQCHSALTKHQRLH).

It belongs to the krueppel C2H2-type zinc-finger protein family.

Its subcellular location is the nucleus. Functionally, may be involved in transcriptional regulation. This Mus musculus (Mouse) protein is Zinc finger protein 184 (Zfp184).